The chain runs to 590 residues: CTP synthase (590 aa).

Residues M1–L278 are amidoligase domain. Residue S20 participates in CTP binding. Position 20 (S20) interacts with UTP. Residues S21–L26 and D78 contribute to the ATP site. Mg(2+) contacts are provided by D78 and E152. CTP contacts are provided by residues D159–E161, K199–Q204, and K235. UTP is bound by residues K199–Q204 and K235. One can recognise a Glutamine amidotransferase type-1 domain in the interval R303–A551. An L-glutamine-binding site is contributed by G366. The active-site Nucleophile; for glutamine hydrolysis is the C393. Residues L394 to Q397, E416, and R477 contribute to the L-glutamine site. Catalysis depends on residues H524 and E526. The interval E566–G590 is disordered.

The protein belongs to the CTP synthase family. In terms of assembly, homotetramer.

The catalysed reaction is UTP + L-glutamine + ATP + H2O = CTP + L-glutamate + ADP + phosphate + 2 H(+). It catalyses the reaction L-glutamine + H2O = L-glutamate + NH4(+). The enzyme catalyses UTP + NH4(+) + ATP = CTP + ADP + phosphate + 2 H(+). The protein operates within pyrimidine metabolism; CTP biosynthesis via de novo pathway; CTP from UDP: step 2/2. Its activity is regulated as follows. Allosterically activated by GTP, when glutamine is the substrate; GTP has no effect on the reaction when ammonia is the substrate. The allosteric effector GTP functions by stabilizing the protein conformation that binds the tetrahedral intermediate(s) formed during glutamine hydrolysis. Inhibited by the product CTP, via allosteric rather than competitive inhibition. Functionally, catalyzes the ATP-dependent amination of UTP to CTP with either L-glutamine or ammonia as the source of nitrogen. Regulates intracellular CTP levels through interactions with the four ribonucleotide triphosphates. The sequence is that of CTP synthase from Mycobacterium leprae (strain Br4923).